A 434-amino-acid polypeptide reads, in one-letter code: Enolase (434 aa).

Q167 is a binding site for (2R)-2-phosphoglycerate. The Proton donor role is filled by E209. Mg(2+) is bound by residues D246, E291, and D318. (2R)-2-phosphoglycerate is bound by residues K343, R372, S373, and K394. K343 functions as the Proton acceptor in the catalytic mechanism.

It belongs to the enolase family. Component of the RNA degradosome, a multiprotein complex involved in RNA processing and mRNA degradation. Mg(2+) is required as a cofactor.

The protein resides in the cytoplasm. Its subcellular location is the secreted. It localises to the cell surface. It catalyses the reaction (2R)-2-phosphoglycerate = phosphoenolpyruvate + H2O. Its pathway is carbohydrate degradation; glycolysis; pyruvate from D-glyceraldehyde 3-phosphate: step 4/5. In terms of biological role, catalyzes the reversible conversion of 2-phosphoglycerate (2-PG) into phosphoenolpyruvate (PEP). It is essential for the degradation of carbohydrates via glycolysis. This Buchnera aphidicola subsp. Schizaphis graminum (strain Sg) protein is Enolase.